A 94-amino-acid chain; its full sequence is Cell division protein FtsB (94 aa).

Residues 1–3 lie on the Cytoplasmic side of the membrane; it reads MRT. Residues 4 to 21 form a helical membrane-spanning segment; it reads FAIFLLIALGWLQYTLWF. The Periplasmic segment spans residues 22–94; sequence GKNGMSDYAQ…YRIIDENSEG (73 aa). Positions 33–71 form a coiled coil; that stretch reads SNDVALQEEVNQGLRNRNEQMFAEIDDLKKGSEAIEERA.

It belongs to the FtsB family. As to quaternary structure, part of a complex composed of FtsB, FtsL and FtsQ.

It is found in the cell inner membrane. Essential cell division protein. May link together the upstream cell division proteins, which are predominantly cytoplasmic, with the downstream cell division proteins, which are predominantly periplasmic. The chain is Cell division protein FtsB from Aliivibrio fischeri (strain ATCC 700601 / ES114) (Vibrio fischeri).